The sequence spans 231 residues: MGQMVEFEKNGVKVRGYIATPKWAGPAVLVFHEWWGLESPLSNIKEICDKLADEGFVAFAPDFYKGQYADNPDDAGKLMTEMFEKRMDEVDRIFQASVEFVKECRYTYPKKVGITGFCCGGTLAMYFAAKFPEMVDASLPFYGLPQLTQINAENIKVPIFFILAEKDEFVNNDEVIDIAKTVWKNGVDVQVKVFSGVTHAFLNEKREDVYDPKRACEAWELAVNFFKTYLK.

Active-site residues include Cys118, Asp167, and His199.

This sequence belongs to the dienelactone hydrolase family.

The enzyme catalyses 2-(5-oxo-2,5-dihydrofuran-2-ylidene)acetate + H2O = 4-oxohex-2-enedioate + H(+). This is Putative carboxymethylenebutenolidase from Aquifex aeolicus (strain VF5).